A 208-amino-acid chain; its full sequence is LexA repressor (208 aa).

Positions 30 to 50 (VREIGKSVGLSSSSTVAAYLE) form a DNA-binding region, H-T-H motif. Active-site for autocatalytic cleavage activity residues include Ser129 and Lys167.

This sequence belongs to the peptidase S24 family. As to quaternary structure, homodimer.

The enzyme catalyses Hydrolysis of Ala-|-Gly bond in repressor LexA.. Represses a number of genes involved in the response to DNA damage (SOS response), including recA and lexA. In the presence of single-stranded DNA, RecA interacts with LexA causing an autocatalytic cleavage which disrupts the DNA-binding part of LexA, leading to derepression of the SOS regulon and eventually DNA repair. In Lacticaseibacillus casei (strain BL23) (Lactobacillus casei), this protein is LexA repressor.